The sequence spans 273 residues: Glutamate 5-kinase (273 aa).

Position 15 (Lys15) interacts with ATP. 3 residues coordinate substrate: Ser55, Asp142, and Asn158. ATP contacts are provided by residues 178–179 (SD) and 220–226 (TGGMLSK).

This sequence belongs to the glutamate 5-kinase family.

The protein localises to the cytoplasm. The enzyme catalyses L-glutamate + ATP = L-glutamyl 5-phosphate + ADP. It participates in amino-acid biosynthesis; L-proline biosynthesis; L-glutamate 5-semialdehyde from L-glutamate: step 1/2. Functionally, catalyzes the transfer of a phosphate group to glutamate to form L-glutamate 5-phosphate. The sequence is that of Glutamate 5-kinase from Streptococcus pyogenes serotype M1.